A 194-amino-acid polypeptide reads, in one-letter code: ATP-dependent Clp protease proteolytic subunit (194 aa).

Ser98 (nucleophile) is an active-site residue. The active site involves His123.

This sequence belongs to the peptidase S14 family. As to quaternary structure, fourteen ClpP subunits assemble into 2 heptameric rings which stack back to back to give a disk-like structure with a central cavity, resembling the structure of eukaryotic proteasomes.

It localises to the cytoplasm. It carries out the reaction Hydrolysis of proteins to small peptides in the presence of ATP and magnesium. alpha-casein is the usual test substrate. In the absence of ATP, only oligopeptides shorter than five residues are hydrolyzed (such as succinyl-Leu-Tyr-|-NHMec, and Leu-Tyr-Leu-|-Tyr-Trp, in which cleavage of the -Tyr-|-Leu- and -Tyr-|-Trp bonds also occurs).. In terms of biological role, cleaves peptides in various proteins in a process that requires ATP hydrolysis. Has a chymotrypsin-like activity. Plays a major role in the degradation of misfolded proteins. The chain is ATP-dependent Clp protease proteolytic subunit from Clostridium botulinum (strain Loch Maree / Type A3).